The sequence spans 872 residues: C-mannosyltransferase dpy-19 homolog (872 aa).

The next 9 membrane-spanning stretches (helical) occupy residues 4 to 24 (PNLY…FLYV), 126 to 146 (FVWL…TLLS), 149 to 169 (IFGG…VAKI), 179 to 199 (FAFP…GRII), 211 to 231 (IFAM…STFI), 257 to 277 (VLDY…MSHG), 279 to 299 (SQLL…ITMV), 326 to 346 (FLML…ELFN), and 399 to 419 (VKTM…AMFF). Positions 508-535 (KRLRAQINRNSVKQRKERAQETKEAATD) form a coiled coil. Residues 514 to 620 (INRNSVKQRK…RSSSRRSSVV (107 aa)) form a disordered region. Basic and acidic residues predominate over residues 524 to 533 (ERAQETKEAA). The segment covering 541–551 (TEEEDKDPEAE) has biased composition (acidic residues). 2 helical membrane-spanning segments follow: residues 627-647 (ILNM…LIGL) and 678-698 (NIFW…PGMV).

The protein belongs to the dpy-19 family.

Its subcellular location is the membrane. Its function is as follows. Probable C-mannosyltransferase that mediates C-mannosylation of tryptophan residues on target proteins. This Drosophila melanogaster (Fruit fly) protein is C-mannosyltransferase dpy-19 homolog.